The chain runs to 318 residues: tRNA dimethylallyltransferase (318 aa).

16–23 (GPTASGKT) is an ATP binding site. 18–23 (TASGKT) serves as a coordination point for substrate. Interaction with substrate tRNA stretches follow at residues 41–44 (DSAL), 165–169 (QRINR), 246–251 (RCVGYR), and 279–286 (KRQITWLR).

Belongs to the IPP transferase family. As to quaternary structure, monomer. Requires Mg(2+) as cofactor.

It catalyses the reaction adenosine(37) in tRNA + dimethylallyl diphosphate = N(6)-dimethylallyladenosine(37) in tRNA + diphosphate. Catalyzes the transfer of a dimethylallyl group onto the adenine at position 37 in tRNAs that read codons beginning with uridine, leading to the formation of N6-(dimethylallyl)adenosine (i(6)A). The sequence is that of tRNA dimethylallyltransferase from Actinobacillus succinogenes (strain ATCC 55618 / DSM 22257 / CCUG 43843 / 130Z).